Reading from the N-terminus, the 297-residue chain is 5'-3' exonuclease (297 aa).

Positions 171–262 (EPDQIVDFKA…MKLEKELFAI (92 aa)) constitute a 5'-3' exonuclease domain.

Functionally, 5'-3' exonuclease acting preferentially on double-stranded DNA. This Mycoplasmopsis pulmonis (strain UAB CTIP) (Mycoplasma pulmonis) protein is 5'-3' exonuclease (polA).